A 157-amino-acid chain; its full sequence is 2-C-methyl-D-erythritol 2,4-cyclodiphosphate synthase (157 aa).

A divalent metal cation contacts are provided by Asp8 and His10. Residues 8 to 10 (DIH) and 34 to 35 (HS) each bind 4-CDP-2-C-methyl-D-erythritol 2-phosphate. A divalent metal cation is bound at residue His42. 4-CDP-2-C-methyl-D-erythritol 2-phosphate is bound by residues 56–58 (DIG) and 132–135 (TTNE).

It belongs to the IspF family. Homotrimer. Requires a divalent metal cation as cofactor.

The catalysed reaction is 4-CDP-2-C-methyl-D-erythritol 2-phosphate = 2-C-methyl-D-erythritol 2,4-cyclic diphosphate + CMP. The protein operates within isoprenoid biosynthesis; isopentenyl diphosphate biosynthesis via DXP pathway; isopentenyl diphosphate from 1-deoxy-D-xylulose 5-phosphate: step 4/6. Involved in the biosynthesis of isopentenyl diphosphate (IPP) and dimethylallyl diphosphate (DMAPP), two major building blocks of isoprenoid compounds. Catalyzes the conversion of 4-diphosphocytidyl-2-C-methyl-D-erythritol 2-phosphate (CDP-ME2P) to 2-C-methyl-D-erythritol 2,4-cyclodiphosphate (ME-CPP) with a corresponding release of cytidine 5-monophosphate (CMP). The polypeptide is 2-C-methyl-D-erythritol 2,4-cyclodiphosphate synthase (Synechococcus sp. (strain JA-3-3Ab) (Cyanobacteria bacterium Yellowstone A-Prime)).